Reading from the N-terminus, the 163-residue chain is Nucleotide-binding protein Cj0374 (163 aa).

This sequence belongs to the YajQ family.

Its function is as follows. Nucleotide-binding protein. This is Nucleotide-binding protein Cj0374 from Campylobacter jejuni subsp. jejuni serotype O:2 (strain ATCC 700819 / NCTC 11168).